The chain runs to 398 residues: MSEDDPRPLHIRRQGLDPADELLAAGALTRVTIGSGADAETHWMATAHAVVRQVMGDHQQFSTRRRWDPRDEIGGKGIFRPRELVGNLMDYDPPEHTRLRRKLTPGFTLRKMQRMAPYIEQIVNDRLDEMERAGSPADLIAFVADKVPGAVLCELVGVPRDDRDMFMKLCHGHLDASLSQKRRAALGDKFSRYLLAMIARERKEPGEGMIGAVVAEYGDDATDEELRGFCVQVMLAGDDNISGMIGLGVLAMLRHPEQIDAFRGDEQSAQRAVDELIRYLTVPYSPTPRIAREDLTLAGQEIKKGDSVICSLPAANRDPALAPDVDRLDVTREPIPHVAFGHGVHHCLGAALARLELRTVFTELWRRFPALRLADPAQDTEFRLTTPAYGLTELMVAW.

Cysteine 347 lines the heme pocket.

The protein belongs to the cytochrome P450 family. It depends on heme as a cofactor.

The protein operates within antibiotic biosynthesis; vancomycin biosynthesis. Functionally, involved in the coupling of aromatic side chains of the heptapeptide of vancomycin. This Amycolatopsis orientalis (Nocardia orientalis) protein is Cytochrome P450 165B3 (cyp165B3).